The sequence spans 326 residues: MKPSIVLYKSIPTDLHQRLAQHFTVNSFDGLTPDNQPELLAALQQAEGLIGSGGKIDQDFLQLAPNLRAASTISVGYDNFDVEALSQRGIALMHTPTVLTETVADTMMALMLSTARRVVELAERVKAGEWQESIGDDWFGVDVHHKTIGILGMGRIGMALAQRAHFGFSMPVLYTSRRPHEAAEQRFGARHCSLDTLLAEADFLCITLPMTEQTYHMIGREQLAKMKSSAILINAGRGPVVDEQTLIAALQDGTIHAAGLDVFEQEPLPVDSPLLTLRNVVAVPHIGSATHETRYNMAACAVDNLINALTGTVKENCVNPQVLITH.

Active-site residues include R237 and E266. H285 (proton donor) is an active-site residue.

This sequence belongs to the D-isomer specific 2-hydroxyacid dehydrogenase family. GhrB subfamily. As to quaternary structure, homodimer.

The protein localises to the cytoplasm. The enzyme catalyses glycolate + NADP(+) = glyoxylate + NADPH + H(+). It catalyses the reaction (R)-glycerate + NAD(+) = 3-hydroxypyruvate + NADH + H(+). The catalysed reaction is (R)-glycerate + NADP(+) = 3-hydroxypyruvate + NADPH + H(+). In terms of biological role, catalyzes the NADPH-dependent reduction of glyoxylate and hydroxypyruvate into glycolate and glycerate, respectively. This Yersinia pestis bv. Antiqua (strain Nepal516) protein is Glyoxylate/hydroxypyruvate reductase B.